A 319-amino-acid polypeptide reads, in one-letter code: Cytochrome f (319 aa).

A signal peptide spans 1 to 34; that stretch reads MQNRNTYEWAKKMTRLISVLVMIHIITRTSISNA. Residues Tyr-35, Cys-55, Cys-58, and His-59 each coordinate heme. A helical transmembrane segment spans residues 287–304; the sequence is GLLLFLASVILAQIFLVL.

Belongs to the cytochrome f family. The 4 large subunits of the cytochrome b6-f complex are cytochrome b6, subunit IV (17 kDa polypeptide, petD), cytochrome f and the Rieske protein, while the 4 small subunits are PetG, PetL, PetM and PetN. The complex functions as a dimer. It depends on heme as a cofactor.

The protein resides in the plastid. It is found in the chloroplast thylakoid membrane. Component of the cytochrome b6-f complex, which mediates electron transfer between photosystem II (PSII) and photosystem I (PSI), cyclic electron flow around PSI, and state transitions. In Pinus thunbergii (Japanese black pine), this protein is Cytochrome f (petA).